We begin with the raw amino-acid sequence, 487 residues long: NADH-quinone oxidoreductase subunit N (487 aa).

14 consecutive transmembrane segments (helical) span residues 8–28, 35–55, 78–98, 104–124, 125–145, 159–179, 203–223, 235–255, 271–291, 297–317, 328–348, 376–396, 409–428, and 451–471; these read LIAM…MLSI, FINA…LYFV, GLVI…LVGY, EFYL…SANH, LASL…LIGY, YMLL…LLYA, ILAG…LVPF, PAPV…AVVM, LVLS…AISQ, LLGY…VAVQ, IGVY…VVSL, AVMT…GFIG, LWWL…YYYL, and ALTA…VLGI.

The protein belongs to the complex I subunit 2 family. As to quaternary structure, NDH-1 is composed of 13 different subunits. Subunits NuoA, H, J, K, L, M, N constitute the membrane sector of the complex.

The protein localises to the cell inner membrane. The catalysed reaction is a quinone + NADH + 5 H(+)(in) = a quinol + NAD(+) + 4 H(+)(out). NDH-1 shuttles electrons from NADH, via FMN and iron-sulfur (Fe-S) centers, to quinones in the respiratory chain. The immediate electron acceptor for the enzyme in this species is believed to be ubiquinone. Couples the redox reaction to proton translocation (for every two electrons transferred, four hydrogen ions are translocated across the cytoplasmic membrane), and thus conserves the redox energy in a proton gradient. The sequence is that of NADH-quinone oxidoreductase subunit N from Yersinia pestis bv. Antiqua (strain Angola).